The chain runs to 22 residues: TQLEAACPNVVSCADILALAAR.

This sequence belongs to the peroxidase family. Classical plant (class III) peroxidase subfamily. Heme b serves as cofactor. Requires Ca(2+) as cofactor.

The protein localises to the secreted. The protein resides in the cell wall. The catalysed reaction is 2 a phenolic donor + H2O2 = 2 a phenolic radical donor + 2 H2O. Removal of H(2)O(2), oxidation of toxic reductants, biosynthesis and degradation of lignin, suberization, auxin catabolism, response to environmental stresses such as wounding, pathogen attack and oxidative stress. These functions might be dependent on each isozyme/isoform in each plant tissue. The protein is Peroxidase 5 of Cycas revoluta (Sago palm).